Consider the following 239-residue polypeptide: NAD-dependent protein deacylase (239 aa).

Residues 1-234 enclose the Deacetylase sirtuin-type domain; that stretch reads MENLNIVTLT…KKVYDYLREK (234 aa). Residues 11-30 and 89-92 contribute to the NAD(+) site; these read GAGISAESGIPTFRGKDGLW and QNVD. The active-site Proton acceptor is H107. Zn(2+)-binding residues include C115, C118, C136, and C139. Residues 176 to 178, 202 to 204, and A220 each bind NAD(+); these read GTS and NPE.

The protein belongs to the sirtuin family. Class III subfamily. Zn(2+) is required as a cofactor.

It localises to the cytoplasm. It catalyses the reaction N(6)-acetyl-L-lysyl-[protein] + NAD(+) + H2O = 2''-O-acetyl-ADP-D-ribose + nicotinamide + L-lysyl-[protein]. Functionally, NAD-dependent protein deacetylase which modulates the activities of several proteins which are inactive in their acetylated form. This Aquifex aeolicus (strain VF5) protein is NAD-dependent protein deacylase.